The primary structure comprises 780 residues: Aconitate hydratase, mitochondrial (780 aa).

Residues 1–27 constitute a mitochondrion transit peptide; it reads MAPYSLLVTRLQKALGVRQYHVASVLC. Lys-31 is subject to N6-succinyllysine. Position 50 is an N6-acetyllysine; alternate (Lys-50). Lys-50 bears the N6-succinyllysine; alternate mark. Gln-99 provides a ligand contact to substrate. N6-acetyllysine; alternate is present on residues Lys-138 and Lys-144. N6-succinyllysine; alternate is present on residues Lys-138 and Lys-144. 192-194 provides a ligand contact to substrate; the sequence is DSH. Lys-233 bears the N6-acetyllysine; alternate mark. Residue Lys-233 is modified to N6-succinyllysine; alternate. Cys-385 is a [4Fe-4S] cluster binding site. Lys-411 is modified (N6-succinyllysine). Positions 448 and 451 each coordinate [4Fe-4S] cluster. Substrate contacts are provided by Arg-474 and Arg-479. Over residues 528-537 the composition is skewed to basic and acidic residues; it reads DADELPKGEF. A disordered region spans residues 528–560; the sequence is DADELPKGEFDPGQDTYQHPPKDSSGQHVDVSP. Position 549 is an N6-succinyllysine (Lys-549). The segment covering 551 to 560 has biased composition (polar residues); the sequence is SSGQHVDVSP. Ser-559 is modified (phosphoserine). The residue at position 573 (Lys-573) is an N6-acetyllysine; alternate. Lys-573 is subject to N6-succinyllysine; alternate. An N6-succinyllysine mark is found at Lys-577 and Lys-591. At Lys-605 the chain carries N6-acetyllysine; alternate. Lys-605 is subject to N6-succinyllysine; alternate. Arg-607 is a substrate binding site. Lys-628 carries the N6-succinyllysine modification. Ser-670 carries the phosphoserine modification. Residue 670–671 coordinates substrate; it reads SR. Lys-689 is subject to N6-succinyllysine. Lys-723 and Lys-730 each carry N6-acetyllysine; alternate. Lys-723 and Lys-730 each carry N6-succinyllysine; alternate. Residues Lys-736, Lys-739, and Lys-743 each carry the N6-acetyllysine modification.

Belongs to the aconitase/IPM isomerase family. Monomer. It depends on [4Fe-4S] cluster as a cofactor. Post-translationally, forms covalent cross-links mediated by transglutaminase TGM2, between a glutamine and the epsilon-amino group of a lysine residue, forming homopolymers and heteropolymers.

Its subcellular location is the mitochondrion. The enzyme catalyses citrate = D-threo-isocitrate. The protein operates within carbohydrate metabolism; tricarboxylic acid cycle; isocitrate from oxaloacetate: step 2/2. Functionally, catalyzes the isomerization of citrate to isocitrate via cis-aconitate. This Homo sapiens (Human) protein is Aconitate hydratase, mitochondrial (ACO2).